The primary structure comprises 279 residues: Acetyl-coenzyme A carboxylase carboxyl transferase subunit beta (279 aa).

The 257-residue stretch at 23 to 279 (LWSKCDECGA…LIKLFKHLRG (257 aa)) folds into the CoA carboxyltransferase N-terminal domain. The Zn(2+) site is built by Cys27, Cys30, Cys46, and Cys49. The C4-type zinc finger occupies 27-49 (CDECGAALHKKQLEDHLYTCPEC).

This sequence belongs to the AccD/PCCB family. As to quaternary structure, acetyl-CoA carboxylase is a heterohexamer composed of biotin carboxyl carrier protein (AccB), biotin carboxylase (AccC) and two subunits each of ACCase subunit alpha (AccA) and ACCase subunit beta (AccD). Zn(2+) is required as a cofactor.

It localises to the cytoplasm. It carries out the reaction N(6)-carboxybiotinyl-L-lysyl-[protein] + acetyl-CoA = N(6)-biotinyl-L-lysyl-[protein] + malonyl-CoA. The protein operates within lipid metabolism; malonyl-CoA biosynthesis; malonyl-CoA from acetyl-CoA: step 1/1. Its function is as follows. Component of the acetyl coenzyme A carboxylase (ACC) complex. Biotin carboxylase (BC) catalyzes the carboxylation of biotin on its carrier protein (BCCP) and then the CO(2) group is transferred by the transcarboxylase to acetyl-CoA to form malonyl-CoA. The chain is Acetyl-coenzyme A carboxylase carboxyl transferase subunit beta from Chlorobaculum parvum (strain DSM 263 / NCIMB 8327) (Chlorobium vibrioforme subsp. thiosulfatophilum).